Here is a 119-residue protein sequence, read N- to C-terminus: Beta-2-microglobulin (119 aa).

An N-terminal signal peptide occupies residues 1–20 (MGRFVAVALLVLLSLSGLET). Residues 25–114 (PKIQVYSRHP…VTFSTPKTVK (90 aa)) enclose the Ig-like C1-type domain. C45 and C100 are disulfide-bonded.

This sequence belongs to the beta-2-microglobulin family. Heterodimer of an alpha chain and a beta chain. Beta-2-microglobulin is the beta-chain of major histocompatibility complex class I molecules.

The protein resides in the secreted. In terms of biological role, component of the class I major histocompatibility complex (MHC). Involved in the presentation of peptide antigens to the immune system. This chain is Beta-2-microglobulin (B2M), found in Callicebus personatus nigrifrons (Black-fronted titi).